A 146-amino-acid polypeptide reads, in one-letter code: Myoglobin (146 aa).

The 140-residue stretch at 2–141 (GDFDMVLKFW…IIADIDATYK (140 aa)) folds into the Globin domain. His60 serves as a coordination point for nitrite. His60 serves as a coordination point for O2. His89 serves as a coordination point for heme b.

Belongs to the globin family. Monomeric.

The protein localises to the cytoplasm. The protein resides in the sarcoplasm. It catalyses the reaction Fe(III)-heme b-[protein] + nitric oxide + H2O = Fe(II)-heme b-[protein] + nitrite + 2 H(+). The catalysed reaction is H2O2 + AH2 = A + 2 H2O. Monomeric heme protein which primary function is to store oxygen and facilitate its diffusion within muscle tissues. Reversibly binds oxygen through a pentacoordinated heme iron and enables its timely and efficient release as needed during periods of heightened demand. Depending on the oxidative conditions of tissues and cells, and in addition to its ability to bind oxygen, it also has a nitrite reductase activity whereby it regulates the production of bioactive nitric oxide. Under stress conditions, like hypoxia and anoxia, it also protects cells against reactive oxygen species thanks to its pseudoperoxidase activity. The protein is Myoglobin (mb) of Tetraodon nigroviridis (Spotted green pufferfish).